The primary structure comprises 982 residues: Presequence protease, mitochondrial (982 aa).

The N-terminal 7 residues, M1–Y7, are a transit peptide targeting the mitochondrion. H84 contributes to the Zn(2+) binding site. The active-site Proton acceptor is the E87. Position 88 (H88) interacts with Zn(2+). The active site involves E160. E185 lines the Zn(2+) pocket.

This sequence belongs to the peptidase M16 family. PreP subfamily. As to quaternary structure, monomer and homodimer; homodimerization is induced by binding of the substrate. The cofactor is Zn(2+).

Its subcellular location is the mitochondrion intermembrane space. It is found in the mitochondrion matrix. In terms of biological role, degrades mitochondrial transit peptides after their cleavage in the intermembrane space or in the matrix, and presequence peptides; clearance of these peptides is required to keep the presequence processing machinery running. Preferentially cleaves the N-terminal side of paired basic amino acid residues. Also degrades other unstructured peptides. May function as an ATP-dependent peptidase as opposed to a metalloendopeptidase. This is Presequence protease, mitochondrial (CYM1) from Kluyveromyces lactis (strain ATCC 8585 / CBS 2359 / DSM 70799 / NBRC 1267 / NRRL Y-1140 / WM37) (Yeast).